Consider the following 457-residue polypeptide: ATP-dependent protease ATPase subunit HslU (457 aa).

Residues Ile-18 and 60-65 (GVGKTE) contribute to the ATP site. The interval 142–171 (KQPGMGFFNPAAPEEQEEQPSADQSSTREK) is disordered. The ATP site is built by Asp-269, Glu-335, and Arg-407.

This sequence belongs to the ClpX chaperone family. HslU subfamily. In terms of assembly, a double ring-shaped homohexamer of HslV is capped on each side by a ring-shaped HslU homohexamer. The assembly of the HslU/HslV complex is dependent on binding of ATP.

It localises to the cytoplasm. Functionally, ATPase subunit of a proteasome-like degradation complex; this subunit has chaperone activity. The binding of ATP and its subsequent hydrolysis by HslU are essential for unfolding of protein substrates subsequently hydrolyzed by HslV. HslU recognizes the N-terminal part of its protein substrates and unfolds these before they are guided to HslV for hydrolysis. The protein is ATP-dependent protease ATPase subunit HslU of Maridesulfovibrio salexigens (strain ATCC 14822 / DSM 2638 / NCIMB 8403 / VKM B-1763) (Desulfovibrio salexigens).